Reading from the N-terminus, the 107-residue chain is Nucleoid-associated protein HNE_0371 (107 aa).

This sequence belongs to the YbaB/EbfC family. In terms of assembly, homodimer.

It is found in the cytoplasm. The protein localises to the nucleoid. Functionally, binds to DNA and alters its conformation. May be involved in regulation of gene expression, nucleoid organization and DNA protection. The polypeptide is Nucleoid-associated protein HNE_0371 (Hyphomonas neptunium (strain ATCC 15444)).